The sequence spans 342 residues: Metalloendoproteinase 4-MMP (342 aa).

Positions 1–34 are cleaved as a signal peptide; the sequence is MHHHHHPCNRKPFTTIFSFFLLYLNLHNQQIIEA. Residues 35–124 constitute a propeptide, activation peptide; sequence RNPSQFTTNP…KTAPFHTGKK (90 aa). A Cysteine switch motif is present at residues 104–111; it reads PRCGFPDD. Zn(2+)-binding residues include Cys-106 and His-252. Glu-253 is a catalytic residue. Residues His-256 and His-262 each coordinate Zn(2+). The N-linked (GlcNAc...) asparagine glycan is linked to Asn-300. Asp-317 is lipidated: GPI-anchor amidated aspartate. The propeptide at 318–342 is removed in mature form; that stretch reads GSRIRSQGMIYSTLSTVIALCFLNW.

The protein belongs to the peptidase M10A family. Matrix metalloproteinases (MMPs) subfamily. Zn(2+) serves as cofactor. As to expression, mostly expressed in flowers and stems, and, to a lower extent, in leaves and roots.

The protein localises to the cell membrane. Repressed by acetohydroxamic acid (AHA). Its function is as follows. Matrix metalloproteinases (MMPs) or matrixins may play a role in the degradation and remodeling of the extracellular matrix (ECM) during development or in response to stresses. Active on myelin basic protein (MBP) and, to some extent, on McaPLGLDpaAR-NH(2) (QF24) and beta-casein. The protein is Metalloendoproteinase 4-MMP of Arabidopsis thaliana (Mouse-ear cress).